The primary structure comprises 149 residues: D-aminoacyl-tRNA deacylase (149 aa).

The Gly-cisPro motif, important for rejection of L-amino acids signature appears at 137 to 138 (GP).

Belongs to the DTD family. In terms of assembly, homodimer.

Its subcellular location is the cytoplasm. It catalyses the reaction glycyl-tRNA(Ala) + H2O = tRNA(Ala) + glycine + H(+). The enzyme catalyses a D-aminoacyl-tRNA + H2O = a tRNA + a D-alpha-amino acid + H(+). In terms of biological role, an aminoacyl-tRNA editing enzyme that deacylates mischarged D-aminoacyl-tRNAs. Also deacylates mischarged glycyl-tRNA(Ala), protecting cells against glycine mischarging by AlaRS. Acts via tRNA-based rather than protein-based catalysis; rejects L-amino acids rather than detecting D-amino acids in the active site. By recycling D-aminoacyl-tRNA to D-amino acids and free tRNA molecules, this enzyme counteracts the toxicity associated with the formation of D-aminoacyl-tRNA entities in vivo and helps enforce protein L-homochirality. This chain is D-aminoacyl-tRNA deacylase, found in Fervidobacterium nodosum (strain ATCC 35602 / DSM 5306 / Rt17-B1).